The following is a 598-amino-acid chain: NADH-quinone oxidoreductase subunit C/D (598 aa).

The NADH dehydrogenase I subunit C stretch occupies residues 1 to 189 (MTDLTTSDSL…DPYVLTKQKE (189 aa)). Positions 213 to 598 (DFMFLNLGPN…IDFVMSDVDR (386 aa)) are NADH dehydrogenase I subunit D.

In the N-terminal section; belongs to the complex I 30 kDa subunit family. The protein in the C-terminal section; belongs to the complex I 49 kDa subunit family. As to quaternary structure, NDH-1 is composed of 13 different subunits. Subunits NuoB, CD, E, F, and G constitute the peripheral sector of the complex.

The protein resides in the cell inner membrane. It carries out the reaction a quinone + NADH + 5 H(+)(in) = a quinol + NAD(+) + 4 H(+)(out). In terms of biological role, NDH-1 shuttles electrons from NADH, via FMN and iron-sulfur (Fe-S) centers, to quinones in the respiratory chain. The immediate electron acceptor for the enzyme in this species is believed to be ubiquinone. Couples the redox reaction to proton translocation (for every two electrons transferred, four hydrogen ions are translocated across the cytoplasmic membrane), and thus conserves the redox energy in a proton gradient. The sequence is that of NADH-quinone oxidoreductase subunit C/D from Yersinia pseudotuberculosis serotype O:1b (strain IP 31758).